Consider the following 545-residue polypeptide: Aclacinomycin-N/aclacinomycin-A oxidase (545 aa).

Residues 1 to 43 (MFVLNEFTRRGFLGTAAAVGGTTVVTTALGGAPAAQAAVPEAA) constitute a signal peptide (tat-type signal). In terms of domain architecture, FAD-binding PCMH-type spans 76 to 256 (FRGRPDVVYV…TRYWFRTPGA (181 aa)). The segment at residues 113-173 (HCFEGFVDDP…WGVTIPAGVC (61 aa)) is a cross-link (6-(S-cysteinyl)-8alpha-(pros-histidyl)-FAD (His-Cys)). Tyr-421 serves as the catalytic Proton acceptor. Thr-451 is a binding site for aclacinomycin Y. FAD is bound at residue Asn-492. The active-site Proton acceptor is the Tyr-493. Tyr-493 provides a ligand contact to aclacinomycin Y.

It belongs to the oxygen-dependent FAD-linked oxidoreductase family. As to quaternary structure, homotetramer; dimer of dimers. Requires FAD as cofactor. Post-translationally, predicted to be exported by the Tat system. The position of the signal peptide cleavage has been experimentally proven. The FAD cofactor is bound via a bicovalent 6-S-cysteinyl, 8alpha-N1-histidyl FAD linkage.

The catalysed reaction is aclacinomycin N + O2 = aclacinomycin A + H2O2. It catalyses the reaction aclacinomycin A + O2 = aclacinomycin Y + H2O2. Inhibited by ascorbic acid and iron ion. Its function is as follows. Involved in the modification of the terminal sugar residues in the last two steps in the biosynthesis of polyketide antibiotics of the aclacinomycin group. In the first reaction, it catalyzes the oxidation of the hydroxyl group at carbon C4 of the L-rhodinose terminal sugar moiety of aclacinomycin N (AclN) to a keto group, modifying the sugar to cinerulose A and generating aclacinomycin A (AclA). In the second reaction, it catalyzes the elimination of two hydrogen atoms from cinerulose A, leading to a double bond between carbon atoms C2 and C3 and the generation of the L-aculose terminal sugar moiety of aclacinomycin Y (AclY). It can also use aclacinomycin analogs, epsilon-pyrromycinone glycosides, rhodirubins (A, B, C and E) and all triglycosides containing L-cinerulose, L-rhodinose or 2-deoxy-L-fucose as terminal sugar. This Streptomyces galilaeus protein is Aclacinomycin-N/aclacinomycin-A oxidase.